The sequence spans 276 residues: Outer plastidial membrane protein porin (276 aa).

The protein belongs to the eukaryotic mitochondrial porin (TC 1.B.8.1) family.

It localises to the plastid outer membrane. Functionally, forms a channel through the cell membrane that allows diffusion of small hydrophilic molecules. The channel adopts an open conformation at low or zero membrane potential and a closed conformation at potentials above 30-40 mV. The open state has a weak anion selectivity whereas the closed state is cation-selective. In Pisum sativum (Garden pea), this protein is Outer plastidial membrane protein porin (POR1).